A 757-amino-acid chain; its full sequence is 5-methyltetrahydropteroyltriglutamate--homocysteine methyltransferase (757 aa).

5-methyltetrahydropteroyltri-L-glutamate-binding positions include 16-19 and lysine 112; that span reads RELK. L-homocysteine contacts are provided by residues 432–434 and glutamate 485; that span reads IGS. Residues 432-434 and glutamate 485 contribute to the L-methionine site; that span reads IGS. 5-methyltetrahydropteroyltri-L-glutamate is bound by residues 516–517 and tryptophan 562; that span reads RC. Aspartate 600 lines the L-homocysteine pocket. Aspartate 600 is an L-methionine binding site. Glutamate 606 serves as a coordination point for 5-methyltetrahydropteroyltri-L-glutamate. Zn(2+)-binding residues include histidine 642, cysteine 644, and glutamate 666. Catalysis depends on histidine 695, which acts as the Proton donor. Position 727 (cysteine 727) interacts with Zn(2+).

The protein belongs to the vitamin-B12 independent methionine synthase family. It depends on Zn(2+) as a cofactor.

The catalysed reaction is 5-methyltetrahydropteroyltri-L-glutamate + L-homocysteine = tetrahydropteroyltri-L-glutamate + L-methionine. It functions in the pathway amino-acid biosynthesis; L-methionine biosynthesis via de novo pathway; L-methionine from L-homocysteine (MetE route): step 1/1. Catalyzes the transfer of a methyl group from 5-methyltetrahydrofolate to homocysteine resulting in methionine formation. In Actinobacillus pleuropneumoniae serotype 5b (strain L20), this protein is 5-methyltetrahydropteroyltriglutamate--homocysteine methyltransferase.